Consider the following 440-residue polypeptide: L-seryl-tRNA(Sec) selenium transferase (440 aa).

At lysine 282 the chain carries N6-(pyridoxal phosphate)lysine.

This sequence belongs to the SelA family. Pyridoxal 5'-phosphate is required as a cofactor.

The protein localises to the cytoplasm. It carries out the reaction L-seryl-tRNA(Sec) + selenophosphate + H(+) = L-selenocysteinyl-tRNA(Sec) + phosphate. Its pathway is aminoacyl-tRNA biosynthesis; selenocysteinyl-tRNA(Sec) biosynthesis; selenocysteinyl-tRNA(Sec) from L-seryl-tRNA(Sec) (bacterial route): step 1/1. Functionally, converts seryl-tRNA(Sec) to selenocysteinyl-tRNA(Sec) required for selenoprotein biosynthesis. The polypeptide is L-seryl-tRNA(Sec) selenium transferase (Campylobacter jejuni (strain RM1221)).